Here is a 338-residue protein sequence, read N- to C-terminus: uncharacterized protein (338 aa).

The TNase-like domain occupies 144–321 (HTLPVDVKAV…RAARVGLWAS (178 aa)). Residues Arg228, Glu236, and Arg270 contribute to the active site.

This is an uncharacterized protein from Capnoides sempervirens (Rock-harlequin).